A 581-amino-acid polypeptide reads, in one-letter code: Putative carboxypeptidase YOL153C (581 aa).

Over 1-29 (MTETHHAPLPDVYPSSKQPTSSTYSKCKK) the chain is Cytoplasmic. Lys-17 is covalently cross-linked (Glycyl lysine isopeptide (Lys-Gly) (interchain with G-Cter in ubiquitin)). The chain crosses the membrane as a helical; Signal-anchor for type II membrane protein span at residues 30 to 46 (FGLPLIGLLTLLLAYIS). Residues 47 to 581 (SFTKPVPNST…IVNVNEYGHD (535 aa)) are Extracellular-facing. Residues Asn-54 and Asn-76 are each glycosylated (N-linked (GlcNAc...) asparagine). Zn(2+) is bound at residue His-170. Residue Asp-172 is part of the active site. Asp-207 is a Zn(2+) binding site. Catalysis depends on Glu-241, which acts as the Proton acceptor. Residues Glu-242 and Asp-270 each contribute to the Zn(2+) site. 2 N-linked (GlcNAc...) asparagine glycosylation sites follow: Asn-335 and Asn-428. His-550 provides a ligand contact to Zn(2+).

The protein belongs to the peptidase M20A family. Zn(2+) is required as a cofactor.

It is found in the membrane. The chain is Putative carboxypeptidase YOL153C from Saccharomyces cerevisiae (strain ATCC 204508 / S288c) (Baker's yeast).